The sequence spans 739 residues: Phosphoribosylformylglycinamidine synthase subunit PurL (739 aa).

His54 is a catalytic residue. Tyr57 and Lys96 together coordinate ATP. Mg(2+) is bound at residue Glu98. Substrate contacts are provided by residues 99 to 102 (SHNH) and Arg121. His100 functions as the Proton acceptor in the catalytic mechanism. Asp122 is a Mg(2+) binding site. Gln245 lines the substrate pocket. Residue Asp275 participates in Mg(2+) binding. 319 to 321 (ESQ) contacts substrate. Residues Asp504 and Gly541 each coordinate ATP. Position 542 (Asn542) interacts with Mg(2+). A substrate-binding site is contributed by Ser544.

This sequence belongs to the FGAMS family. Monomer. Part of the FGAM synthase complex composed of 1 PurL, 1 PurQ and 2 PurS subunits.

The protein localises to the cytoplasm. The enzyme catalyses N(2)-formyl-N(1)-(5-phospho-beta-D-ribosyl)glycinamide + L-glutamine + ATP + H2O = 2-formamido-N(1)-(5-O-phospho-beta-D-ribosyl)acetamidine + L-glutamate + ADP + phosphate + H(+). Its pathway is purine metabolism; IMP biosynthesis via de novo pathway; 5-amino-1-(5-phospho-D-ribosyl)imidazole from N(2)-formyl-N(1)-(5-phospho-D-ribosyl)glycinamide: step 1/2. Functionally, part of the phosphoribosylformylglycinamidine synthase complex involved in the purines biosynthetic pathway. Catalyzes the ATP-dependent conversion of formylglycinamide ribonucleotide (FGAR) and glutamine to yield formylglycinamidine ribonucleotide (FGAM) and glutamate. The FGAM synthase complex is composed of three subunits. PurQ produces an ammonia molecule by converting glutamine to glutamate. PurL transfers the ammonia molecule to FGAR to form FGAM in an ATP-dependent manner. PurS interacts with PurQ and PurL and is thought to assist in the transfer of the ammonia molecule from PurQ to PurL. The sequence is that of Phosphoribosylformylglycinamidine synthase subunit PurL from Lactococcus lactis subsp. cremoris (strain SK11).